We begin with the raw amino-acid sequence, 241 residues long: Pyridoxal phosphate phosphatase PHOSPHO2 (241 aa).

Residue Asp-8 is the Nucleophile of the active site. Mg(2+) contacts are provided by Asp-8 and Asp-10. The active-site Proton donor is Asp-10. Positions 19 and 99 each coordinate substrate. Asp-179 contacts Mg(2+).

It belongs to the HAD-like hydrolase superfamily. PHOSPHO family. Requires Mg(2+) as cofactor.

The catalysed reaction is pyridoxal 5'-phosphate + H2O = pyridoxal + phosphate. Its function is as follows. Phosphatase that has high activity toward pyridoxal 5'-phosphate (PLP). Also active at much lower level toward pyrophosphate, phosphoethanolamine (PEA), phosphocholine (PCho), phospho-l-tyrosine, fructose-6-phosphate, p-nitrophenyl phosphate, and h-glycerophosphate. The protein is Pyridoxal phosphate phosphatase PHOSPHO2 (PHOSPHO2) of Bos taurus (Bovine).